The sequence spans 389 residues: Dihydroorotase (389 aa).

Residues His-51 and His-53 each contribute to the Zn(2+) site. Residues 53–55 (HVR) and Asn-85 contribute to the substrate site. Residues Lys-133, His-158, His-193, and Asp-256 each coordinate Zn(2+). Lys-133 bears the N6-carboxylysine mark. The active site involves Asp-256. Substrate contacts are provided by residues His-260 and 274–275 (PG).

This sequence belongs to the metallo-dependent hydrolases superfamily. DHOase family. Class I DHOase subfamily. Zn(2+) serves as cofactor.

It carries out the reaction (S)-dihydroorotate + H2O = N-carbamoyl-L-aspartate + H(+). It functions in the pathway pyrimidine metabolism; UMP biosynthesis via de novo pathway; (S)-dihydroorotate from bicarbonate: step 3/3. Functionally, catalyzes the reversible cyclization of carbamoyl aspartate to dihydroorotate. This chain is Dihydroorotase, found in Sulfolobus acidocaldarius (strain ATCC 33909 / DSM 639 / JCM 8929 / NBRC 15157 / NCIMB 11770).